A 712-amino-acid polypeptide reads, in one-letter code: MTTQITYFATAARGFEEMLKTELEQICQAECKVAQGGVHFTTTQRGAYQALLHSRLASRILLPLVTTKIFSDLDLYATIVGINWAEIFDPRDTFFVDFNGTNREIRNTQFGAMRVKDGVVDYFERKGFARPTVDKDHADIRIHVYLDRENMVVSLDLSGDALHMRGYREDTGKAPLRETLAAAIILRSGWQKGTPLVDPMCGSGTLLIEAAQMQAGIAPQLHRKHWGFNAWKGHQQAVWKEVLEQAYLQQNEEIQPLFFGFDLDHRVLAKAKQNARNAGVAHLIQWQQGDVAALKNPCPEQVGTVICNPPYGERLGTTPALIALYSVFGQRLKHQFSGWNASIFSGEPELLNCLRLRSHRQFKAKNGPLDCLQKNYQISERAVAEQQADELKFEQNAQVAPDFANRLTKNIKKIEKWAKQQGINAYRLYDADLPEYNLAVDRYDDHIVVQEYAAPKNIDEQKARQRLLDAVSATLYVTGVETNKLVLKVRQKQKGTNQYEKLANKGDYFYVTEYGAKLWVNLTDYLDTGLFLDHRLTRKMVGQMAKGKTFLNLFAYTGSATIHAALNGAKSTTTIDMSNTYLNWAEQNLELNNLPLRNNRLFQADCLQWLAECRERFELIFVDPPTFSNSKRMEDSWDVQRDHIKLMTQLKRILTADGIIVFSNNKRGFKMDFEGLAELGLQAENISHKTLPLDFERNPQIHNCWIIRHIEN.

The THUMP domain occupies 46–157 (GAYQALLHSR…RENMVVSLDL (112 aa)).

The protein belongs to the methyltransferase superfamily. RlmKL family.

Its subcellular location is the cytoplasm. It catalyses the reaction guanosine(2445) in 23S rRNA + S-adenosyl-L-methionine = N(2)-methylguanosine(2445) in 23S rRNA + S-adenosyl-L-homocysteine + H(+). The enzyme catalyses guanosine(2069) in 23S rRNA + S-adenosyl-L-methionine = N(2)-methylguanosine(2069) in 23S rRNA + S-adenosyl-L-homocysteine + H(+). Specifically methylates the guanine in position 2445 (m2G2445) and the guanine in position 2069 (m7G2069) of 23S rRNA. This Actinobacillus pleuropneumoniae serotype 7 (strain AP76) protein is Ribosomal RNA large subunit methyltransferase K/L.